Here is a 24-residue protein sequence, read N- to C-terminus: Brevinin-1Sa (24 aa).

A disulfide bridge connects residues C18 and C24.

In terms of tissue distribution, expressed by the skin glands.

Its subcellular location is the secreted. Its function is as follows. Antibacterial activity against Gram-negative bacterium E.coli. This chain is Brevinin-1Sa, found in Lithobates sphenocephalus (Southern leopard frog).